A 185-amino-acid polypeptide reads, in one-letter code: Crossover junction endodeoxyribonuclease RuvC (185 aa).

Active-site residues include Asp7, Glu66, and Asp137. Mg(2+) contacts are provided by Asp7, Glu66, and Asp137.

This sequence belongs to the RuvC family. Homodimer which binds Holliday junction (HJ) DNA. The HJ becomes 2-fold symmetrical on binding to RuvC with unstacked arms; it has a different conformation from HJ DNA in complex with RuvA. In the full resolvosome a probable DNA-RuvA(4)-RuvB(12)-RuvC(2) complex forms which resolves the HJ. Requires Mg(2+) as cofactor.

The protein resides in the cytoplasm. It catalyses the reaction Endonucleolytic cleavage at a junction such as a reciprocal single-stranded crossover between two homologous DNA duplexes (Holliday junction).. Functionally, the RuvA-RuvB-RuvC complex processes Holliday junction (HJ) DNA during genetic recombination and DNA repair. Endonuclease that resolves HJ intermediates. Cleaves cruciform DNA by making single-stranded nicks across the HJ at symmetrical positions within the homologous arms, yielding a 5'-phosphate and a 3'-hydroxyl group; requires a central core of homology in the junction. The consensus cleavage sequence is 5'-(A/T)TT(C/G)-3'. Cleavage occurs on the 3'-side of the TT dinucleotide at the point of strand exchange. HJ branch migration catalyzed by RuvA-RuvB allows RuvC to scan DNA until it finds its consensus sequence, where it cleaves and resolves the cruciform DNA. The sequence is that of Crossover junction endodeoxyribonuclease RuvC from Anaeromyxobacter sp. (strain K).